The primary structure comprises 335 residues: MSLQKCQEEWSEIEKEFQQLQETHKVYKQKLEELNSLQNLCSSCINKHKRRLTEFKGNLHGLKRTSNLEEKELVQQIDGTIKERRNAFFDMEAYLPKKNGLYLNLVLGNVNVTLLSTQAKFAYKDEYEKFKLYLTIILLLGAITCRFVLNYRVTDEVFNFLLVWYYCTLTIRESILISNGSRIKGWWVSHHYVSTFLSGVMLTWPDGLMYQIFRNQFLAFSIFQSCVQFLQYYYQSGCLYRLRALGERNHLDLTVEGFQSWMWRGLTFLLPFLFFGHFWQLYNAITLFGLSRHDACKEWQVFVLALTFLLLFLGNFLTTLKVVHTKFQKNKLKKP.

Residues 1–40 adopt a coiled-coil conformation; that stretch reads MSLQKCQEEWSEIEKEFQQLQETHKVYKQKLEELNSLQNL. Transmembrane regions (helical) follow at residues 100–122, 130–150, 157–177, 193–213, 268–288, and 300–320; these read GLYL…AKFA, FKLY…FVLN, VFNF…SILI, VSTF…YQIF, FLLP…ITLF, and QVFV…LTTL.

Belongs to the TMEM120 family.

Its subcellular location is the nucleus inner membrane. In terms of biological role, necessary for efficient adipogenesis. Does not show ion channel activity. The protein is Transmembrane protein 120B-A (tmem120b-a) of Xenopus laevis (African clawed frog).